A 460-amino-acid polypeptide reads, in one-letter code: Mercuric reductase (460 aa).

Residues 1–65 (MTHLKITGMT…AVAGLGYKAM (65 aa)) enclose the HMA domain. A metal cation contacts are provided by Cys-11 and Cys-14. Residues Ala-110, Gly-130, and Thr-135 each contribute to the FAD site. The cysteines at positions 136 and 141 are disulfide-linked. Positions 145 and 211 each coordinate FAD. Positions 457 and 458 each coordinate Hg(2+).

It belongs to the class-I pyridine nucleotide-disulfide oxidoreductase family. Homodimer. Requires FAD as cofactor.

It carries out the reaction Hg + NADP(+) + H(+) = Hg(2+) + NADPH. Its function is as follows. Resistance to Hg(2+) in bacteria appears to be governed by a specialized system which includes mercuric reductase. MerA protein is responsible for volatilizing mercury as Hg(0). The polypeptide is Mercuric reductase (merA) (Serratia marcescens).